Here is a 37-residue protein sequence, read N- to C-terminus: uncharacterized protein (37 aa).

Residues 17–37 (TFVLIVVLFILLIIVGAAFIC) form a helical membrane-spanning segment.

It belongs to the SscA family.

It is found in the membrane. This is an uncharacterized protein from Bacillus subtilis (strain 168).